The following is a 641-amino-acid chain: DEAD-box ATP-dependent RNA helicase 50 (641 aa).

3 disordered regions span residues Ser86–Phe115, Arg129–Val189, and Asp197–Ile216. Residues Pro150 to Thr159 are compositionally biased toward acidic residues. A Q motif motif is present at residues Arg240 to Ala268. In terms of domain architecture, Helicase ATP-binding spans Tyr271 to Ile452. Asp284–Thr291 is an ATP binding site. The short motif at Asp399 to Asp402 is the DEAD box element. In terms of domain architecture, Helicase C-terminal spans Asn487 to Val641.

This sequence belongs to the DEAD box helicase family.

It catalyses the reaction ATP + H2O = ADP + phosphate + H(+). Functionally, probably involved in resistance to biotic and abiotic stresses. Confers tolerance to oxidative stress and mediates pathogenesis-related (PR) genes expression. Exhibits RNA-dependent ATPase and ATP-dependent RNA helicase activities in vitro. The sequence is that of DEAD-box ATP-dependent RNA helicase 50 from Oryza sativa subsp. japonica (Rice).